We begin with the raw amino-acid sequence, 451 residues long: Bifunctional protein GlmU (451 aa).

The segment at Met-1 to Arg-217 is pyrophosphorylase. Residues Leu-6–Gly-9, Lys-20, Gln-68, Gly-73–Thr-74, Tyr-95–Asp-97, Gly-134, Glu-146, Asn-161, and Asn-215 contribute to the UDP-N-acetyl-alpha-D-glucosamine site. Asp-97 serves as a coordination point for Mg(2+). Asn-215 serves as a coordination point for Mg(2+). A linker region spans residues Ile-218 to Glu-238. The segment at Gly-239–Glu-451 is N-acetyltransferase. 2 residues coordinate UDP-N-acetyl-alpha-D-glucosamine: Arg-320 and Lys-338. His-350 functions as the Proton acceptor in the catalytic mechanism. Residues Tyr-353 and Asn-364 each contribute to the UDP-N-acetyl-alpha-D-glucosamine site. Residues Ala-367, Asn-373–Tyr-374, Ser-392, Ala-410, and Arg-427 each bind acetyl-CoA.

This sequence in the N-terminal section; belongs to the N-acetylglucosamine-1-phosphate uridyltransferase family. It in the C-terminal section; belongs to the transferase hexapeptide repeat family. As to quaternary structure, homotrimer. It depends on Mg(2+) as a cofactor.

It is found in the cytoplasm. It catalyses the reaction alpha-D-glucosamine 1-phosphate + acetyl-CoA = N-acetyl-alpha-D-glucosamine 1-phosphate + CoA + H(+). The enzyme catalyses N-acetyl-alpha-D-glucosamine 1-phosphate + UTP + H(+) = UDP-N-acetyl-alpha-D-glucosamine + diphosphate. Its pathway is nucleotide-sugar biosynthesis; UDP-N-acetyl-alpha-D-glucosamine biosynthesis; N-acetyl-alpha-D-glucosamine 1-phosphate from alpha-D-glucosamine 6-phosphate (route II): step 2/2. The protein operates within nucleotide-sugar biosynthesis; UDP-N-acetyl-alpha-D-glucosamine biosynthesis; UDP-N-acetyl-alpha-D-glucosamine from N-acetyl-alpha-D-glucosamine 1-phosphate: step 1/1. It functions in the pathway bacterial outer membrane biogenesis; LPS lipid A biosynthesis. Its function is as follows. Catalyzes the last two sequential reactions in the de novo biosynthetic pathway for UDP-N-acetylglucosamine (UDP-GlcNAc). The C-terminal domain catalyzes the transfer of acetyl group from acetyl coenzyme A to glucosamine-1-phosphate (GlcN-1-P) to produce N-acetylglucosamine-1-phosphate (GlcNAc-1-P), which is converted into UDP-GlcNAc by the transfer of uridine 5-monophosphate (from uridine 5-triphosphate), a reaction catalyzed by the N-terminal domain. This chain is Bifunctional protein GlmU, found in Thermosipho africanus (strain TCF52B).